The chain runs to 194 residues: Thymidine kinase (194 aa).

Residues 15–22 and 89–92 contribute to the ATP site; these read GPMFSGKS and DEAH. Glu-90 serves as the catalytic Proton acceptor. The Zn(2+) site is built by Cys-146, Cys-149, Cys-178, and Cys-181.

The protein belongs to the thymidine kinase family. As to quaternary structure, homotetramer.

Its subcellular location is the cytoplasm. It catalyses the reaction thymidine + ATP = dTMP + ADP + H(+). The chain is Thymidine kinase from Metamycoplasma arthritidis (strain 158L3-1) (Mycoplasma arthritidis).